The following is a 352-amino-acid chain: C-C chemokine receptor type 5 (352 aa).

Residues 1–30 (MDYQVSSPTYDIDYYTSEPCQKINVKQIAA) lie on the Extracellular side of the membrane. Tyrosine 3 carries the post-translational modification Sulfotyrosine. O-linked (GalNAc...) serine glycosylation is found at serine 6 and serine 7. A sulfotyrosine mark is found at tyrosine 10, tyrosine 14, and tyrosine 15. 2 cysteine pairs are disulfide-bonded: cysteine 20/cysteine 269 and cysteine 101/cysteine 178. The chain crosses the membrane as a helical span at residues 31 to 58 (RLLPPLYSLVFIFGFVGNMLVILILINC). The Cytoplasmic segment spans residues 59–68 (KRLKSMTDIY). Residues 69–89 (LLNLAISDLFFLLTVPFWAHY) traverse the membrane as a helical segment. The Extracellular segment spans residues 90–102 (AAAQWDFGNTMCQ). The chain crosses the membrane as a helical span at residues 103 to 124 (LLTGLYFIGFFSGIFFIILLTI). Over 125-141 (DRYLAIVHAVFALKART) the chain is Cytoplasmic. The chain crosses the membrane as a helical span at residues 142–166 (VTFGVVTSVITWVVAVFASLPGIIF). Topologically, residues 167–198 (TRSQKEGLHYTCSSHFPYSQYQFWKNFQTLKI) are extracellular. Residues 199–218 (VILGLVLPLLVMVICYSGIL) traverse the membrane as a helical segment. At 219 to 235 (KTLLRCRNEKKRHRAVR) the chain is on the cytoplasmic side. The helical transmembrane segment at 236-260 (LIFTIMIVYFLFWAPYNIVLLLNTF) threads the bilayer. The Extracellular segment spans residues 261–277 (QEFFGLNNCSSSNRLDQ). The chain crosses the membrane as a helical span at residues 278–301 (AMQVTETLGMTHCCINPIIYAFVG). Topologically, residues 302–352 (EKFRNYLLVFFQKHIAKRFCKCCSIFQQEAPERASSVYTRSTGEQEISVGL) are cytoplasmic. Residues cysteine 321, cysteine 323, and cysteine 324 are each lipidated (S-palmitoyl cysteine). Phosphoserine; by BARK1 is present on residues serine 336, serine 337, serine 342, and serine 349.

It belongs to the G-protein coupled receptor 1 family. Interacts with PRAF2. Efficient ligand binding to CCL3/MIP-1alpha and CCL4/MIP-1beta requires sulfation, O-glycosylation and sialic acid modifications. Glycosylation on Ser-6 is required for efficient binding of CCL4. Interacts with GRK2. Interacts with ARRB1 and ARRB2. Interacts with CNIH4. Interacts with S100A4; this interaction stimulates T-lymphocyte chemotaxis. In terms of processing, sulfated on at least 2 of the N-terminal tyrosines. Sulfation is required for efficient binding of the chemokines, CCL3 and CCL4. Palmitoylation in the C-terminal is important for cell surface expression. Post-translationally, phosphorylation on serine residues in the C-terminal is stimulated by binding CC chemokines especially by APO-RANTES. In terms of processing, O-glycosylated, but not N-glycosylated. Ser-6 appears to be the major site even if Ser-7 may be also O-glycosylated. Also sialylated glycans present which contribute to chemokine binding. Thr-16 and Ser-17 may also be glycosylated and, if so, with small moieties such as a T-antigen.

It is found in the cell membrane. In terms of biological role, receptor for a number of inflammatory CC-chemokines including CCL3/MIP-1-alpha, CCL4/MIP-1-beta and RANTES and subsequently transduces a signal by increasing the intracellular calcium ion level. May play a role in the control of granulocytic lineage proliferation or differentiation. Participates in T-lymphocyte migration to the infection site by acting as a chemotactic receptor. The sequence is that of C-C chemokine receptor type 5 (CCR5) from Pongo abelii (Sumatran orangutan).